A 152-amino-acid chain; its full sequence is Transcriptional regulator MraZ (152 aa).

SpoVT-AbrB domains follow at residues 5-52 (ATTL…PLPE) and 81-124 (ADDC…NEDA).

The protein belongs to the MraZ family. In terms of assembly, forms oligomers.

Its subcellular location is the cytoplasm. The protein localises to the nucleoid. This chain is Transcriptional regulator MraZ, found in Idiomarina loihiensis (strain ATCC BAA-735 / DSM 15497 / L2-TR).